The primary structure comprises 893 residues: cGMP-specific 3',5'-cyclic phosphodiesterase (893 aa).

2 consecutive GAF domains span residues 21–173 and 205–390; these read DIDV…GIGI and NLEC…GLGI. A PDEase domain is found at 420–743; it reads GQDQTEKLIQ…RNWQDLAEKV (324 aa). His496 acts as the Proton donor in catalysis. A divalent metal cation-binding residues include His500, His536, Asp537, and Asp647. Disordered stretches follow at residues 784-807 and 844-893; these read QQSQHGGDDSHTPEHQRSGSRLSI and HVSE…CALL. Composition is skewed to basic and acidic residues over residues 789–800 and 844–853; these read GGDDSHTPEHQR and HVSEDMDDKS. Low complexity predominate over residues 864–880; the sequence is SVGRMSASSSTSSAGTV. Residues 883-893 are compositionally biased toward basic residues; that stretch reads SKKRSKLCALL. Cys890 carries the post-translational modification Cysteine methyl ester. The S-farnesyl cysteine moiety is linked to residue Cys890. A propeptide spans 891–893 (removed in mature form); it reads ALL.

The protein belongs to the cyclic nucleotide phosphodiesterase family. As to quaternary structure, interacts with PrBP. A divalent metal cation serves as cofactor.

It is found in the cell membrane. The catalysed reaction is 3',5'-cyclic GMP + H2O = GMP + H(+). Functionally, has a role regulating cGMP transport in Malpighian tubule principal cells. The sequence is that of cGMP-specific 3',5'-cyclic phosphodiesterase from Drosophila virilis (Fruit fly).